We begin with the raw amino-acid sequence, 47 residues long: uncharacterized protein (47 aa).

Positions 24-47 are disordered; sequence FGPNPIEPPTDIAPDPDSTKTWLI.

This is an uncharacterized protein from Mycobacterium tuberculosis (strain ATCC 25618 / H37Rv).